The primary structure comprises 505 residues: Ent-kaurene oxidase 2 (505 aa).

The chain crosses the membrane as a helical span at residues 3-23; the sequence is AFVPGGAGAAAAAVGGFVAAA. Cys-449 serves as a coordination point for heme.

Belongs to the cytochrome P450 family. Requires heme as cofactor. As to expression, widely expressed.

It localises to the membrane. The catalysed reaction is ent-kaur-16-ene + 3 reduced [NADPH--hemoprotein reductase] + 3 O2 = ent-kaur-16-en-19-oate + 3 oxidized [NADPH--hemoprotein reductase] + 4 H2O + 4 H(+). It functions in the pathway plant hormone biosynthesis; gibberellin biosynthesis. Catalyzes three successive oxidations of the 4-methyl group of ent-kaurene giving kaurenoic acid, a key step in gibberellins (GAs) biosynthesis. GAs, which are involved many processes, including stem elongation, play a central role in plant development. The chain is Ent-kaurene oxidase 2 from Oryza sativa subsp. japonica (Rice).